Here is a 295-residue protein sequence, read N- to C-terminus: GTP cyclohydrolase FolE2 (295 aa).

Belongs to the GTP cyclohydrolase IV family.

The enzyme catalyses GTP + H2O = 7,8-dihydroneopterin 3'-triphosphate + formate + H(+). It functions in the pathway cofactor biosynthesis; 7,8-dihydroneopterin triphosphate biosynthesis; 7,8-dihydroneopterin triphosphate from GTP: step 1/1. Its function is as follows. Converts GTP to 7,8-dihydroneopterin triphosphate. In Pseudomonas putida (strain W619), this protein is GTP cyclohydrolase FolE2.